Reading from the N-terminus, the 118-residue chain is Small ribosomal subunit protein uS13 (118 aa).

The segment at arginine 93–lysine 118 is disordered.

The protein belongs to the universal ribosomal protein uS13 family. As to quaternary structure, part of the 30S ribosomal subunit. Forms a loose heterodimer with protein S19. Forms two bridges to the 50S subunit in the 70S ribosome.

In terms of biological role, located at the top of the head of the 30S subunit, it contacts several helices of the 16S rRNA. In the 70S ribosome it contacts the 23S rRNA (bridge B1a) and protein L5 of the 50S subunit (bridge B1b), connecting the 2 subunits; these bridges are implicated in subunit movement. Contacts the tRNAs in the A and P-sites. This is Small ribosomal subunit protein uS13 from Pseudomonas syringae pv. tomato (strain ATCC BAA-871 / DC3000).